Consider the following 419-residue polypeptide: Creatine kinase S-type, mitochondrial (419 aa).

The transit peptide at 1–39 directs the protein to the mitochondrion; the sequence is MASAFSKLLTGRNASLLFTTLGTSALTTGYLLNRQKVSA. The segment at 40–64 is cardiolipin-binding; sequence DAREQHKLFPPSADYPDLRKHNNCM. Positions 46–132 constitute a Phosphagen kinase N-terminal domain; that stretch reads KLFPPSADYP…FDPVIKLRHN (87 aa). Residues 159–401 enclose the Phosphagen kinase C-terminal domain; the sequence is YVLSSRVRTG…NYLVDCEKKL (243 aa). ATP contacts are provided by residues 162–166 and His225; that span reads SSRVR. Position 255 is a phosphotyrosine (Tyr255). ATP is bound by residues Arg270, Arg326, 354–359, and Asp369; that span reads RGTGGV. Residue Thr356 is modified to Phosphothreonine.

The protein belongs to the ATP:guanido phosphotransferase family. In terms of assembly, exists as an octamer composed of four CKMT2 homodimers. As to expression, sarcomere-specific. Found only in heart and skeletal muscles.

It is found in the mitochondrion inner membrane. It carries out the reaction creatine + ATP = N-phosphocreatine + ADP + H(+). Functionally, reversibly catalyzes the transfer of phosphate between ATP and various phosphogens (e.g. creatine phosphate). Creatine kinase isoenzymes play a central role in energy transduction in tissues with large, fluctuating energy demands, such as skeletal muscle, heart, brain and spermatozoa. This chain is Creatine kinase S-type, mitochondrial (Ckmt2), found in Rattus norvegicus (Rat).